The primary structure comprises 448 residues: Bifunctional protein GlmU (448 aa).

Positions 1 to 232 (MTARSSLTIV…EDEVRGINTK (232 aa)) are pyrophosphorylase. UDP-N-acetyl-alpha-D-glucosamine contacts are provided by residues 11–14 (LAAG), Lys-25, Gln-78, and 83–84 (GT). Mg(2+) is bound at residue Asp-108. 4 residues coordinate UDP-N-acetyl-alpha-D-glucosamine: Gly-144, Glu-158, Asn-173, and Asn-230. Residue Asn-230 coordinates Mg(2+). Residues 233 to 253 (AQLAQAEAAMQARLRQAAMDA) form a linker region. The tract at residues 254 to 448 (GVTLIAPETV…FRNAKLRQTK (195 aa)) is N-acetyltransferase. Residues Arg-319 and Lys-337 each coordinate UDP-N-acetyl-alpha-D-glucosamine. The active-site Proton acceptor is His-349. Residues Tyr-352 and Asn-363 each coordinate UDP-N-acetyl-alpha-D-glucosamine. Residues Ala-366, 372–373 (NY), Ser-409, and Arg-426 contribute to the acetyl-CoA site. The tract at residues 427-448 (SPQTTKEGAAARFRNAKLRQTK) is disordered.

This sequence in the N-terminal section; belongs to the N-acetylglucosamine-1-phosphate uridyltransferase family. The protein in the C-terminal section; belongs to the transferase hexapeptide repeat family. As to quaternary structure, homotrimer. It depends on Mg(2+) as a cofactor.

It is found in the cytoplasm. The catalysed reaction is alpha-D-glucosamine 1-phosphate + acetyl-CoA = N-acetyl-alpha-D-glucosamine 1-phosphate + CoA + H(+). It carries out the reaction N-acetyl-alpha-D-glucosamine 1-phosphate + UTP + H(+) = UDP-N-acetyl-alpha-D-glucosamine + diphosphate. It participates in nucleotide-sugar biosynthesis; UDP-N-acetyl-alpha-D-glucosamine biosynthesis; N-acetyl-alpha-D-glucosamine 1-phosphate from alpha-D-glucosamine 6-phosphate (route II): step 2/2. The protein operates within nucleotide-sugar biosynthesis; UDP-N-acetyl-alpha-D-glucosamine biosynthesis; UDP-N-acetyl-alpha-D-glucosamine from N-acetyl-alpha-D-glucosamine 1-phosphate: step 1/1. Its pathway is bacterial outer membrane biogenesis; LPS lipid A biosynthesis. In terms of biological role, catalyzes the last two sequential reactions in the de novo biosynthetic pathway for UDP-N-acetylglucosamine (UDP-GlcNAc). The C-terminal domain catalyzes the transfer of acetyl group from acetyl coenzyme A to glucosamine-1-phosphate (GlcN-1-P) to produce N-acetylglucosamine-1-phosphate (GlcNAc-1-P), which is converted into UDP-GlcNAc by the transfer of uridine 5-monophosphate (from uridine 5-triphosphate), a reaction catalyzed by the N-terminal domain. The protein is Bifunctional protein GlmU of Bradyrhizobium sp. (strain ORS 278).